A 926-amino-acid polypeptide reads, in one-letter code: Alpha-aminoadipic semialdehyde synthase, mitochondrial (926 aa).

The transit peptide at M1 to A27 directs the protein to the mitochondrion. Positions L28 to L455 are lysine-ketoglutarate reductase. N6-acetyllysine occurs at positions 48, 52, and 56. K93 is modified (N6-acetyllysine; alternate). An N6-succinyllysine; alternate modification is found at K93. K128 carries the post-translational modification N6-acetyllysine. An N6-acetyllysine; alternate modification is found at K138. K138 bears the N6-succinyllysine; alternate mark. The residue at position 274 (K274) is an N6-succinyllysine. An N6-acetyllysine; alternate modification is found at K286. N6-succinyllysine; alternate is present on K286. The residue at position 333 (K333) is an N6-succinyllysine. Position 458 is an N6-acetyllysine; alternate (K458). K458 carries the post-translational modification N6-succinyllysine; alternate. The interval M477–L926 is saccharopine dehydrogenase. Positions 488, 512, and 516 each coordinate NAD(+). An N6-acetyllysine; alternate mark is found at K523 and K535. Residues K523 and K535 each carry the N6-succinyllysine; alternate modification. L554, A576, and S577 together coordinate NAD(+). S577–Y578 provides a ligand contact to L-saccharopine. K584 carries the post-translational modification N6-acetyllysine; alternate. K584 carries the N6-succinyllysine; alternate modification. NAD(+)-binding residues include L603, D604, and P605. Residue D604 coordinates L-saccharopine. L-saccharopine is bound at residue R703. The residue at position 707 (K707) is an N6-acetyllysine. T724 to R726 serves as a coordination point for L-saccharopine. K732 is modified (N6-succinyllysine). The residue at position 739 (K739) is an N6-acetyllysine. K761 bears the N6-acetyllysine; alternate mark. An N6-succinyllysine; alternate modification is found at K761. K778 and K780 each carry N6-acetyllysine.

It in the N-terminal section; belongs to the AlaDH/PNT family. This sequence in the C-terminal section; belongs to the saccharopine dehydrogenase family. As to quaternary structure, homotetramer.

It is found in the mitochondrion. The enzyme catalyses L-saccharopine + NADP(+) + H2O = L-lysine + 2-oxoglutarate + NADPH + H(+). It carries out the reaction L-saccharopine + NAD(+) + H2O = (S)-2-amino-6-oxohexanoate + L-glutamate + NADH + H(+). Its pathway is amino-acid degradation; L-lysine degradation via saccharopine pathway; glutaryl-CoA from L-lysine: step 1/6. It participates in amino-acid degradation; L-lysine degradation via saccharopine pathway; glutaryl-CoA from L-lysine: step 2/6. In terms of biological role, bifunctional enzyme that catalyzes the first two steps in lysine degradation. The sequence is that of Alpha-aminoadipic semialdehyde synthase, mitochondrial from Rattus norvegicus (Rat).